A 270-amino-acid polypeptide reads, in one-letter code: Putative pyruvate, phosphate dikinase regulatory protein 2 (270 aa).

Residue 151–158 (GVSRTSKT) coordinates ADP.

It belongs to the pyruvate, phosphate/water dikinase regulatory protein family. PDRP subfamily.

It carries out the reaction N(tele)-phospho-L-histidyl/L-threonyl-[pyruvate, phosphate dikinase] + ADP = N(tele)-phospho-L-histidyl/O-phospho-L-threonyl-[pyruvate, phosphate dikinase] + AMP + H(+). The catalysed reaction is N(tele)-phospho-L-histidyl/O-phospho-L-threonyl-[pyruvate, phosphate dikinase] + phosphate + H(+) = N(tele)-phospho-L-histidyl/L-threonyl-[pyruvate, phosphate dikinase] + diphosphate. Bifunctional serine/threonine kinase and phosphorylase involved in the regulation of the pyruvate, phosphate dikinase (PPDK) by catalyzing its phosphorylation/dephosphorylation. The protein is Putative pyruvate, phosphate dikinase regulatory protein 2 of Listeria welshimeri serovar 6b (strain ATCC 35897 / DSM 20650 / CCUG 15529 / CIP 8149 / NCTC 11857 / SLCC 5334 / V8).